The primary structure comprises 459 residues: Argininosuccinate lyase (459 aa).

It belongs to the lyase 1 family. Argininosuccinate lyase subfamily.

The protein localises to the cytoplasm. It catalyses the reaction 2-(N(omega)-L-arginino)succinate = fumarate + L-arginine. It functions in the pathway amino-acid biosynthesis; L-arginine biosynthesis; L-arginine from L-ornithine and carbamoyl phosphate: step 3/3. The sequence is that of Argininosuccinate lyase from Ruminiclostridium cellulolyticum (strain ATCC 35319 / DSM 5812 / JCM 6584 / H10) (Clostridium cellulolyticum).